Reading from the N-terminus, the 237-residue chain is Ig heavy chain Mem5 (237 aa).

Ig-like domains lie at 1 to 119 (EVKL…LTVS) and 126 to 218 (PSVY…KKIE). A disulfide bridge connects residues C22 and C98. Residues 101 to 105 (VDYGT) form a d segment region. The segment at 106 to 120 (NYDYWGQGTTLTVSS) is JH2 segment. Cysteines 147 and 202 form a disulfide.

It is found in the secreted. Its function is as follows. Anti-influenza H3N2 neuraminidase antibody. This chain is Ig heavy chain Mem5, found in Mus musculus (Mouse).